A 366-amino-acid chain; its full sequence is Peptide chain release factor 2 (366 aa).

Gln251 is subject to N5-methylglutamine.

The protein belongs to the prokaryotic/mitochondrial release factor family. Post-translationally, methylated by PrmC. Methylation increases the termination efficiency of RF2.

The protein localises to the cytoplasm. Peptide chain release factor 2 directs the termination of translation in response to the peptide chain termination codons UGA and UAA. The chain is Peptide chain release factor 2 (prfB) from Listeria innocua serovar 6a (strain ATCC BAA-680 / CLIP 11262).